We begin with the raw amino-acid sequence, 164 residues long: Transcriptional regulator MraZ (164 aa).

SpoVT-AbrB domains follow at residues 7–60 and 83–126; these read HFTN…EIDE and SEIL…EPGR. Positions 141–164 are disordered; it reads LRKQLSSRPVAPDAQPPRPHGARE. Positions 154–164 are enriched in pro residues; the sequence is AQPPRPHGARE.

It belongs to the MraZ family. In terms of assembly, forms oligomers.

It is found in the cytoplasm. The protein localises to the nucleoid. The protein is Transcriptional regulator MraZ of Beijerinckia indica subsp. indica (strain ATCC 9039 / DSM 1715 / NCIMB 8712).